An 80-amino-acid polypeptide reads, in one-letter code: Small ribosomal subunit protein bS18 (80 aa).

The protein belongs to the bacterial ribosomal protein bS18 family. Part of the 30S ribosomal subunit. Forms a tight heterodimer with protein bS6.

Binds as a heterodimer with protein bS6 to the central domain of the 16S rRNA, where it helps stabilize the platform of the 30S subunit. The sequence is that of Small ribosomal subunit protein bS18 from Staphylococcus carnosus (strain TM300).